The primary structure comprises 366 residues: Protein RecA (366 aa).

Residue 77–84 (GPESSGKT) coordinates ATP. The segment at 346 to 366 (IGGPGGEDDDAGGAAGVGDEA) is disordered.

Belongs to the RecA family.

It is found in the cytoplasm. Functionally, can catalyze the hydrolysis of ATP in the presence of single-stranded DNA, the ATP-dependent uptake of single-stranded DNA by duplex DNA, and the ATP-dependent hybridization of homologous single-stranded DNAs. It interacts with LexA causing its activation and leading to its autocatalytic cleavage. In Rhodospirillum rubrum (strain ATCC 11170 / ATH 1.1.1 / DSM 467 / LMG 4362 / NCIMB 8255 / S1), this protein is Protein RecA.